Here is a 707-residue protein sequence, read N- to C-terminus: Solute carrier family 15 member 1 (707 aa).

A helical membrane pass occupies residues 1–21; that stretch reads MGMSKSLSCFGYPLSIFFIVV. Residues 22–53 are Extracellular-facing; it reads NEFCERFSYYGMRALLILYFRNFIGWDDNLST. N-linked (GlcNAc...) asparagine glycosylation is present at Asn-50. A helical transmembrane segment spans residues 54-74; the sequence is VIYHTFVALCYLTPILGALIA. At 75–82 the chain is on the cytoplasmic side; that stretch reads DAWLGKFK. A helical transmembrane segment spans residues 83 to 103; sequence TIVWLSIVYTIGQAVTSLSSV. At 104 to 118 the chain is on the extracellular side; sequence NELTDNNHDGTPDSL. A helical membrane pass occupies residues 119–139; the sequence is PVHVAVCMIGLLLIALGTGGI. Residues 140–161 are Cytoplasmic-facing; that stretch reads KPCVSAFGGDQFEEGQEKQRNR. Residues 162-182 traverse the membrane as a helical segment; sequence FFSIFYLAINAGSLLSTIITP. Residues 183–198 are Extracellular-facing; the sequence is MVRVQQCGIHVKQACY. A helical transmembrane segment spans residues 199–219; the sequence is PLAFGIPAILMAVSLIVFIIG. Residues 220–276 lie on the Cytoplasmic side of the membrane; sequence SGMYKKFKPQGNILSKVVKCICFAIKNRFRHRSKQFPKRAHWLDWAKEKYDERLIAQ. Residues 277–297 form a helical membrane-spanning segment; the sequence is IKMVTRVLFLYIPLPMFWALF. Over 298–327 the chain is Extracellular; it reads DQQGSRWTLQATTMSGRIGILEIQPDQMQT. A helical membrane pass occupies residues 328-348; the sequence is VNTILIIILVPIMDAVVYPLI. The Cytoplasmic portion of the chain corresponds to 349-361; the sequence is AKCGLNFTSLKKM. Residues 362–382 form a helical membrane-spanning segment; that stretch reads TIGMFLASMAFVAAAILQVEI. The Extracellular portion of the chain corresponds to 383–583; it reads DKTLPVFPKA…PPNTMNMAWQ (201 aa). Residues 383 to 583 form an extracellular domain (ECD) region; it reads DKTLPVFPKA…PPNTMNMAWQ (201 aa). Residues Asn-439, Asn-498, and Asn-513 are each glycosylated (N-linked (GlcNAc...) asparagine). Residues 584-604 form a helical membrane-spanning segment; the sequence is IPQYFLITSGEVVFSITGLEF. At 605 to 618 the chain is on the cytoplasmic side; sequence SYSQAPSNMKSVLQ. Residues 619–639 traverse the membrane as a helical segment; sequence AGWLLTVAVGNIIVLIVAGAG. Over 640–644 the chain is Extracellular; the sequence is QINKQ. A helical transmembrane segment spans residues 645–665; the sequence is WAEYILFAALLLVVCVIFAIM. Residues 666-707 are Cytoplasmic-facing; that stretch reads ARFYTYVNPAEIEAQFEEDEKKKNPEKNDLYPSLAPVSQTQM. Residues 682–707 are disordered; it reads EEDEKKKNPEKNDLYPSLAPVSQTQM. Over residues 684–694 the composition is skewed to basic and acidic residues; that stretch reads DEKKKNPEKND.

The protein belongs to the major facilitator superfamily. Proton-dependent oligopeptide transporter (POT/PTR) (TC 2.A.17) family. As to quaternary structure, interacts (via extracellular domain region) with trypsin. As to expression, intestine, kidney, liver and low in brain.

It is found in the apical cell membrane. It catalyses the reaction a dipeptide(out) + H(+)(out) = a dipeptide(in) + H(+)(in). The catalysed reaction is an L-amino acid tripeptide(out) + H(+)(out) = an L-amino acid tripeptide(in) + H(+)(in). The enzyme catalyses L-alanyl-L-lysine(out) + H(+)(out) = L-alanyl-L-lysine(in) + H(+)(in). It carries out the reaction L-alanyl-L-proline(out) + H(+)(out) = L-alanyl-L-proline(in) + H(+)(in). It catalyses the reaction L-alanyl-L-valine(out) + H(+)(out) = L-alanyl-L-valine(in) + H(+)(in). The catalysed reaction is carnosine(out) + H(+)(out) = carnosine(in) + H(+)(in). The enzyme catalyses glycyl-L-glutamine(out) + H(+)(out) = glycyl-L-glutamine(in) + H(+)(in). It carries out the reaction glycyl-L-leucine(out) + H(+)(out) = glycyl-L-leucine(in) + H(+)(in). It catalyses the reaction glycyl-L-proline(out) + H(+)(out) = glycyl-L-proline(in) + H(+)(in). The catalysed reaction is glycyl-sarcosine(out) + H(+)(out) = glycyl-sarcosine(in) + H(+)(in). The enzyme catalyses L-leucyl-L-leucine(out) + H(+)(out) = L-leucyl-L-leucine(in) + H(+)(in). It carries out the reaction L-leucyl-L-proline(out) + H(+)(out) = L-leucyl-L-proline(in) + H(+)(in). It catalyses the reaction L-phenylalanyl-L-leucine(out) + H(+)(out) = L-phenylalanyl-L-leucine(in) + H(+)(in). The catalysed reaction is L-phenylalanyl-L-phenylalanine(out) + H(+)(out) = L-phenylalanyl-L-phenylalanine(in) + H(+)(in). The enzyme catalyses L-lysyl-glycine(out) + H(+)(out) = L-lysyl-glycine(in) + H(+)(in). It carries out the reaction L-tyrosylglycine(out) + H(+)(out) = L-tyrosylglycine(in) + H(+)(in). It catalyses the reaction L-alanyl-L-aspartate(out) + 2 H(+)(out) = L-alanyl-L-aspartate(in) + 2 H(+)(in). The catalysed reaction is L-aspartyl-glycine(out) + 2 H(+)(out) = L-aspartyl-glycine(in) + 2 H(+)(in). The enzyme catalyses glycyl-L-aspartate(out) + 2 H(+)(out) = glycyl-L-aspartate(in) + 2 H(+)(in). It carries out the reaction glycyl-L-glutamate(out) + 2 H(+)(out) = glycyl-L-glutamate(in) + 2 H(+)(in). It catalyses the reaction L-alanyl-L-leucyl-L-alanine(out) + H(+)(out) = L-alanyl-L-leucyl-L-alanine(in) + H(+)(in). The catalysed reaction is L-alanyl-L-prolylglycine(out) + H(+)(out) = L-alanyl-L-prolylglycine(in) + H(+)(in). The enzyme catalyses glycylglycyl-L-isoleucine(out) + H(+)(out) = glycylglycyl-L-isoleucine(in) + H(+)(in). It carries out the reaction glycylglycyl-L-proline(out) + H(+)(out) = glycylglycyl-L-proline(in) + H(+)(in). It catalyses the reaction L-methionyl-L-phenylalanyl-L-methionine(out) + H(+)(out) = L-methionyl-L-phenylalanyl-L-methionine(in) + H(+)(in). The catalysed reaction is N-acetyl-D-muramoyl-L-alanyl-D-isoglutamine(out) + 2 H(+)(out) = N-acetyl-D-muramoyl-L-alanyl-D-isoglutamine(in) + 2 H(+)(in). The enzyme catalyses N(alpha)-formyl-L-methionyl-L-leucyl-L-phenylalanine(out) + 2 H(+)(out) = N(alpha)-formyl-L-methionyl-L-leucyl-L-phenylalanine(in) + 2 H(+)(in). Its function is as follows. Electrogenic proton-coupled amino-acid transporter that transports oligopeptides of 2 to 4 amino acids with a preference for dipeptides. Transports neutral and monovalently charged peptides with a proton to peptide stoichiometry of 1:1 or 2:1. Primarily responsible for the absorption of dietary di- and tripeptides from the small intestinal lumen. Mediates transepithelial transport of muramyl and N-formylated bacterial dipeptides contributing to recognition of pathogenic bacteria by the mucosal immune system. This chain is Solute carrier family 15 member 1 (SLC15A1), found in Oryctolagus cuniculus (Rabbit).